The primary structure comprises 593 residues: NADH-quinone oxidoreductase subunit C/D 1 (593 aa).

The NADH dehydrogenase I subunit C stretch occupies residues 1-193; that stretch reads MPWAKEGDLQ…DNLEGLMNYD (193 aa). The segment at 217–593 is NADH dehydrogenase I subunit D; it reads AQIVLNWGPL…IDPVVGETDR (377 aa).

This sequence in the N-terminal section; belongs to the complex I 30 kDa subunit family. The protein in the C-terminal section; belongs to the complex I 49 kDa subunit family. In terms of assembly, NDH-1 is composed of 13 different subunits. Subunits NuoB, CD, E, F, and G constitute the peripheral sector of the complex.

Its subcellular location is the cell inner membrane. It catalyses the reaction a quinone + NADH + 5 H(+)(in) = a quinol + NAD(+) + 4 H(+)(out). Its function is as follows. NDH-1 shuttles electrons from NADH, via FMN and iron-sulfur (Fe-S) centers, to quinones in the respiratory chain. The immediate electron acceptor for the enzyme in this species is believed to be ubiquinone. Couples the redox reaction to proton translocation (for every two electrons transferred, four hydrogen ions are translocated across the cytoplasmic membrane), and thus conserves the redox energy in a proton gradient. The chain is NADH-quinone oxidoreductase subunit C/D 1 (nuoC1) from Aquifex aeolicus (strain VF5).